The chain runs to 254 residues: Imidazole glycerol phosphate synthase subunit HisF (254 aa).

Active-site residues include D12 and D131.

The protein belongs to the HisA/HisF family. As to quaternary structure, heterodimer of HisH and HisF.

It is found in the cytoplasm. It catalyses the reaction 5-[(5-phospho-1-deoxy-D-ribulos-1-ylimino)methylamino]-1-(5-phospho-beta-D-ribosyl)imidazole-4-carboxamide + L-glutamine = D-erythro-1-(imidazol-4-yl)glycerol 3-phosphate + 5-amino-1-(5-phospho-beta-D-ribosyl)imidazole-4-carboxamide + L-glutamate + H(+). It functions in the pathway amino-acid biosynthesis; L-histidine biosynthesis; L-histidine from 5-phospho-alpha-D-ribose 1-diphosphate: step 5/9. Functionally, IGPS catalyzes the conversion of PRFAR and glutamine to IGP, AICAR and glutamate. The HisF subunit catalyzes the cyclization activity that produces IGP and AICAR from PRFAR using the ammonia provided by the HisH subunit. This chain is Imidazole glycerol phosphate synthase subunit HisF, found in Frankia casuarinae (strain DSM 45818 / CECT 9043 / HFP020203 / CcI3).